A 64-amino-acid chain; its full sequence is Large ribosomal subunit protein uL29 (64 aa).

It belongs to the universal ribosomal protein uL29 family.

This is Large ribosomal subunit protein uL29 from Polynucleobacter necessarius subsp. necessarius (strain STIR1).